The primary structure comprises 220 residues: MSILFISGTGTDVGKTIATAALASAFHHRGDRVIPVKPVQTGEPDGRGDIHTVEKLSGIRGVEFTRYPDPLAPNLAARRAGLPQVTLPDLAREIRDLDAPDRIVLVEGAGGVLVRLADDLTLLDVAAELDAPLVLVTSLGLGSLNAAELSVQAARTAGVEVLGLIGGSASPDPGLAEQLNHGELTRICRVPLLGVLPAGAGDLLPDDFQAMAQSCLTLPL.

An ATP-binding site is contributed by 12-17 (DVGKTI). A Mg(2+)-binding site is contributed by T16. K37 is a catalytic residue. T41 contacts substrate. Residues D49, 107 to 110 (EGAG), 167 to 168 (GS), and 197 to 199 (PAG) contribute to the ATP site. Positions 49 and 107 each coordinate Mg(2+).

This sequence belongs to the dethiobiotin synthetase family. As to quaternary structure, homodimer. Requires Mg(2+) as cofactor.

The protein resides in the cytoplasm. It catalyses the reaction (7R,8S)-7,8-diammoniononanoate + CO2 + ATP = (4R,5S)-dethiobiotin + ADP + phosphate + 3 H(+). The protein operates within cofactor biosynthesis; biotin biosynthesis; biotin from 7,8-diaminononanoate: step 1/2. Functionally, catalyzes a mechanistically unusual reaction, the ATP-dependent insertion of CO2 between the N7 and N8 nitrogen atoms of 7,8-diaminopelargonic acid (DAPA, also called 7,8-diammoniononanoate) to form a ureido ring. This Corynebacterium efficiens (strain DSM 44549 / YS-314 / AJ 12310 / JCM 11189 / NBRC 100395) protein is ATP-dependent dethiobiotin synthetase BioD.